Consider the following 246-residue polypeptide: MTSVASSSSRIVTESPVVVALDYNNRDSALAFVDLIDPRDCRLKVGKEMFTLFGPQIVRDLQQRGFDVFLDLKFHDIPNTTAHAVAAAADLGVWMVNVHASGGARMMTAAREALIPFGKDAPLLIAVTVLTSMEASDLLDLGVTLSPAEHAERLARLTQNCGLDGVVCSAQEAVRFKSALGHNFKLVTPGIRPQGSDAGDQRRIMTPEEALAAGVDYMVIGRPVTQSADPALTLKAINASLGKVTG.

Substrate is bound by residues Asp-22, Lys-44, 71–80, Thr-131, Arg-192, Gln-201, Gly-221, and Arg-222; that span reads DLKFHDIPNT. Residue Lys-73 is the Proton donor of the active site.

The protein belongs to the OMP decarboxylase family. Type 1 subfamily. Homodimer.

It carries out the reaction orotidine 5'-phosphate + H(+) = UMP + CO2. It participates in pyrimidine metabolism; UMP biosynthesis via de novo pathway; UMP from orotate: step 2/2. Catalyzes the decarboxylation of orotidine 5'-monophosphate (OMP) to uridine 5'-monophosphate (UMP). In Enterobacter sp. (strain 638), this protein is Orotidine 5'-phosphate decarboxylase.